Consider the following 129-residue polypeptide: M-zodatoxin-Lt8c (129 aa).

Positions 1–20 (MKYFVVALALVAAFACIAES) are cleaved as a signal peptide. Positions 21 to 60 (KPAESEHELAEVEEENELADLEDAVWLEHLADLSDLEEAR) are excised as a propeptide. The Processing quadruplet motif signature appears at 57-60 (EEAR).

Cleavage of the propeptide depends on the processing quadruplet motif (XXXR, with at least one of X being E). Expressed by the venom gland.

The protein localises to the secreted. Insecticidal, cytolytic and antimicrobial peptide. Forms voltage-dependent, ion-permeable channels in membranes. At high concentration causes cell membrane lysis. This is M-zodatoxin-Lt8c (cit 1-3) from Lachesana tarabaevi (Spider).